The sequence spans 126 residues: Large ribosomal subunit protein bL12 (126 aa).

The protein belongs to the bacterial ribosomal protein bL12 family. As to quaternary structure, homodimer. Part of the ribosomal stalk of the 50S ribosomal subunit. Forms a multimeric L10(L12)X complex, where L10 forms an elongated spine to which 2 to 4 L12 dimers bind in a sequential fashion. Binds GTP-bound translation factors.

In terms of biological role, forms part of the ribosomal stalk which helps the ribosome interact with GTP-bound translation factors. Is thus essential for accurate translation. The chain is Large ribosomal subunit protein bL12 from Teredinibacter turnerae (strain ATCC 39867 / T7901).